The chain runs to 173 residues: S-ribosylhomocysteine lyase (173 aa).

The Fe cation site is built by H54, H58, and C128.

The protein belongs to the LuxS family. As to quaternary structure, homodimer. Fe cation is required as a cofactor.

The enzyme catalyses S-(5-deoxy-D-ribos-5-yl)-L-homocysteine = (S)-4,5-dihydroxypentane-2,3-dione + L-homocysteine. Functionally, involved in the synthesis of autoinducer 2 (AI-2) which is secreted by bacteria and is used to communicate both the cell density and the metabolic potential of the environment. The regulation of gene expression in response to changes in cell density is called quorum sensing. Catalyzes the transformation of S-ribosylhomocysteine (RHC) to homocysteine (HC) and 4,5-dihydroxy-2,3-pentadione (DPD). This is S-ribosylhomocysteine lyase from Hydrogenovibrio crunogenus (strain DSM 25203 / XCL-2) (Thiomicrospira crunogena).